The primary structure comprises 443 residues: ATP-dependent protease ATPase subunit HslU (443 aa).

ATP is bound by residues I18, G60–E65, D256, E321, and R393.

Belongs to the ClpX chaperone family. HslU subfamily. In terms of assembly, a double ring-shaped homohexamer of HslV is capped on each side by a ring-shaped HslU homohexamer. The assembly of the HslU/HslV complex is dependent on binding of ATP.

It is found in the cytoplasm. In terms of biological role, ATPase subunit of a proteasome-like degradation complex; this subunit has chaperone activity. The binding of ATP and its subsequent hydrolysis by HslU are essential for unfolding of protein substrates subsequently hydrolyzed by HslV. HslU recognizes the N-terminal part of its protein substrates and unfolds these before they are guided to HslV for hydrolysis. The polypeptide is ATP-dependent protease ATPase subunit HslU (Escherichia fergusonii (strain ATCC 35469 / DSM 13698 / CCUG 18766 / IAM 14443 / JCM 21226 / LMG 7866 / NBRC 102419 / NCTC 12128 / CDC 0568-73)).